Consider the following 353-residue polypeptide: MLYSLLYGYFNINLFQYLTFRAGLGFFIAFFLTLFLMPKFILWAKAKKANQPISSFVPSHQNKKDTPTMGGIVFVFATIVASVLCASLGNLYVLLGIIVLVGFSFVGFRDDYTKINQQNNAGMSAKMKFGMLFVLSLVVSVLLSLKGLDTFLYAPFLKNPLFEMPTMLAVGFWVLVFLSTSNAVNLTDGLDGLASVPSIFTLLSLSIFVYVAGNAEFSKYLLYPKVIDVGELFVVSLALVGSLFGFLWYNCNPASVFMGDSGSLALGGFIAYNAIVSHNEILLVLMGSIFVVETLSVILQVGSYKTRKKRLFLMAPIHHHFEQKGWAENKVIVRFWIISMLSNLVALLSLKVR.

Transmembrane regions (helical) follow at residues 24-44, 66-86, 88-108, 129-149, 160-180, 192-212, 229-249, 256-276, 281-301, and 330-350; these read LGFF…ILWA, TPTM…VLCA, LGNL…FVGF, FGML…KGLD, PLFE…FLST, GLAS…VYVA, VGEL…FLWY, VFMG…NAIV, ILLV…ILQV, and KVIV…LLSL.

Belongs to the glycosyltransferase 4 family. MraY subfamily. Mg(2+) serves as cofactor.

It localises to the cell inner membrane. The catalysed reaction is UDP-N-acetyl-alpha-D-muramoyl-L-alanyl-gamma-D-glutamyl-meso-2,6-diaminopimeloyl-D-alanyl-D-alanine + di-trans,octa-cis-undecaprenyl phosphate = di-trans,octa-cis-undecaprenyl diphospho-N-acetyl-alpha-D-muramoyl-L-alanyl-D-glutamyl-meso-2,6-diaminopimeloyl-D-alanyl-D-alanine + UMP. The protein operates within cell wall biogenesis; peptidoglycan biosynthesis. Its function is as follows. Catalyzes the initial step of the lipid cycle reactions in the biosynthesis of the cell wall peptidoglycan: transfers peptidoglycan precursor phospho-MurNAc-pentapeptide from UDP-MurNAc-pentapeptide onto the lipid carrier undecaprenyl phosphate, yielding undecaprenyl-pyrophosphoryl-MurNAc-pentapeptide, known as lipid I. In Helicobacter pylori (strain HPAG1), this protein is Phospho-N-acetylmuramoyl-pentapeptide-transferase.